The primary structure comprises 270 residues: Probable septum site-determining protein MinC (270 aa).

The segment at 105–129 is disordered; that stretch reads DRRAPSSKAADEAPVQQAEPAAPAA. Positions 116–129 are enriched in low complexity; that stretch reads EAPVQQAEPAAPAA.

Belongs to the MinC family. Interacts with MinD and FtsZ.

Its function is as follows. Cell division inhibitor that blocks the formation of polar Z ring septums. Rapidly oscillates between the poles of the cell to destabilize FtsZ filaments that have formed before they mature into polar Z rings. Prevents FtsZ polymerization. This is Probable septum site-determining protein MinC from Burkholderia pseudomallei (strain 1106a).